A 495-amino-acid chain; its full sequence is Putative aldehyde dehydrogenase AldA (495 aa).

Residue 212–218 coordinates NAD(+); that stretch reads GKGSESG. Active-site residues include Glu-256 and Cys-290.

Belongs to the aldehyde dehydrogenase family.

It catalyses the reaction an aldehyde + NAD(+) + H2O = a carboxylate + NADH + 2 H(+). The chain is Putative aldehyde dehydrogenase AldA (aldA) from Staphylococcus aureus (strain Mu50 / ATCC 700699).